The chain runs to 329 residues: ATP-dependent (S)-NAD(P)H-hydrate dehydratase (329 aa).

The 292-residue stretch at 35–326 (TLQLVRNIIP…AEVGAAFSKL (292 aa)) folds into the YjeF C-terminal domain. Position 67 is a phosphotyrosine (Y67). (6S)-NADPHX is bound by residues G135 and 188–194 (NHMEFSR). N-linked (GlcNAc...) asparagine glycosylation is found at N207 and N222. ATP contacts are provided by residues 228-232 (KGERD) and 247-256 (GSSRRCGGQG). D257 lines the (6S)-NADPHX pocket. The N-linked (GlcNAc...) asparagine glycan is linked to N279.

The protein belongs to the NnrD/CARKD family. Mg(2+) serves as cofactor.

The protein resides in the mitochondrion. The catalysed reaction is (6S)-NADHX + ATP = ADP + phosphate + NADH + H(+). It catalyses the reaction (6S)-NADPHX + ATP = ADP + phosphate + NADPH + H(+). Catalyzes the dehydration of the S-form of NAD(P)HX at the expense of ATP, which is converted to ADP. Together with NAD(P)HX epimerase, which catalyzes the epimerization of the S- and R-forms, the enzyme allows the repair of both epimers of NAD(P)HX, a damaged form of NAD(P)H that is a result of enzymatic or heat-dependent hydration. The chain is ATP-dependent (S)-NAD(P)H-hydrate dehydratase from Pongo abelii (Sumatran orangutan).